Reading from the N-terminus, the 396-residue chain is Dihydrolipoyllysine-residue acetyltransferase component of pyruvate dehydrogenase complex (396 aa).

One can recognise a Lipoyl-binding domain in the interval 1-69; it reads MPDIGLEEVE…KTDALIMRCE (69 aa). At Lys35 the chain carries N6-lipoyllysine. One can recognise a Peripheral subunit-binding (PSBD) domain in the interval 104-141; sequence HATPLIRRLARNLNINLYDVVGTGPKNRILKEDLDLYQ. His369 is a catalytic residue.

Belongs to the 2-oxoacid dehydrogenase family. As to quaternary structure, forms a 24-polypeptide structural core with octahedral symmetry. The cofactor is (R)-lipoate.

The enzyme catalyses N(6)-[(R)-dihydrolipoyl]-L-lysyl-[protein] + acetyl-CoA = N(6)-[(R)-S(8)-acetyldihydrolipoyl]-L-lysyl-[protein] + CoA. In terms of biological role, the pyruvate dehydrogenase complex catalyzes the overall conversion of pyruvate to acetyl-CoA and CO(2). It contains multiple copies of three enzymatic components: pyruvate dehydrogenase (E1), dihydrolipoamide acetyltransferase (E2) and lipoamide dehydrogenase (E3). The chain is Dihydrolipoyllysine-residue acetyltransferase component of pyruvate dehydrogenase complex (aceF) from Buchnera aphidicola subsp. Acyrthosiphon pisum (strain APS) (Acyrthosiphon pisum symbiotic bacterium).